The chain runs to 144 residues: Large ribosomal subunit protein uL11 (144 aa).

This sequence belongs to the universal ribosomal protein uL11 family. Part of the ribosomal stalk of the 50S ribosomal subunit. Interacts with L10 and the large rRNA to form the base of the stalk. L10 forms an elongated spine to which L12 dimers bind in a sequential fashion forming a multimeric L10(L12)X complex. One or more lysine residues are methylated.

Functionally, forms part of the ribosomal stalk which helps the ribosome interact with GTP-bound translation factors. The protein is Large ribosomal subunit protein uL11 of Polaromonas sp. (strain JS666 / ATCC BAA-500).